The following is a 100-amino-acid chain: Urease subunit gamma (100 aa).

It belongs to the urease gamma subunit family. In terms of assembly, heterotrimer of UreA (gamma), UreB (beta) and UreC (alpha) subunits. Three heterotrimers associate to form the active enzyme.

The protein localises to the cytoplasm. The enzyme catalyses urea + 2 H2O + H(+) = hydrogencarbonate + 2 NH4(+). It participates in nitrogen metabolism; urea degradation; CO(2) and NH(3) from urea (urease route): step 1/1. The polypeptide is Urease subunit gamma (Bradyrhizobium diazoefficiens (strain JCM 10833 / BCRC 13528 / IAM 13628 / NBRC 14792 / USDA 110)).